Reading from the N-terminus, the 877-residue chain is Alanine--tRNA ligase (877 aa).

Positions 562, 566, 664, and 668 each coordinate Zn(2+).

This sequence belongs to the class-II aminoacyl-tRNA synthetase family. Zn(2+) is required as a cofactor.

It localises to the cytoplasm. It carries out the reaction tRNA(Ala) + L-alanine + ATP = L-alanyl-tRNA(Ala) + AMP + diphosphate. Functionally, catalyzes the attachment of alanine to tRNA(Ala) in a two-step reaction: alanine is first activated by ATP to form Ala-AMP and then transferred to the acceptor end of tRNA(Ala). Also edits incorrectly charged Ser-tRNA(Ala) and Gly-tRNA(Ala) via its editing domain. The sequence is that of Alanine--tRNA ligase from Picosynechococcus sp. (strain ATCC 27264 / PCC 7002 / PR-6) (Agmenellum quadruplicatum).